The chain runs to 391 residues: MATRIAMVAGEASGDLLASHLIRAIRQQVPEAEFYGIGGPKMQAEGFDALWPCERLAVHGYVDALKRYRELSGIRKALLRRVQADRPDAFIGVDAPDFNLWLEGRIRSSGIPAIHFVSPSIWAWRGGRIKGIARSVSHMLCLFPFEPALYEKAGIPVSYVGHPLADVFPLVPDRAAARELLSLPTDCRIVALLPGSRQSEVRSLAATYIETARLLAERHPDIGFVVPLATRETRALFEQALHAADADELPIRLLFGHAVEAMTAADVVLVASGTASLEAALLKRPMVISYRIGKWQYRLMKRMAYLPWVGLPNILCNDSVVPELLQDDATPQALADALDRWLNDADACAELALRFDALHRELRQDTAGRAAAAILPYLNRSPEWKPSRQSA.

Belongs to the LpxB family.

It carries out the reaction a lipid X + a UDP-2-N,3-O-bis[(3R)-3-hydroxyacyl]-alpha-D-glucosamine = a lipid A disaccharide + UDP + H(+). It functions in the pathway bacterial outer membrane biogenesis; LPS lipid A biosynthesis. Its function is as follows. Condensation of UDP-2,3-diacylglucosamine and 2,3-diacylglucosamine-1-phosphate to form lipid A disaccharide, a precursor of lipid A, a phosphorylated glycolipid that anchors the lipopolysaccharide to the outer membrane of the cell. The polypeptide is Lipid-A-disaccharide synthase (Aromatoleum aromaticum (strain DSM 19018 / LMG 30748 / EbN1) (Azoarcus sp. (strain EbN1))).